The following is a 217-amino-acid chain: tRNA (guanine-N(7)-)-methyltransferase (217 aa).

S-adenosyl-L-methionine is bound by residues Glu44, Glu69, Asp96, and Asp118. Residue Asp118 is part of the active site. Residues Lys122, Asp154, and 191–194 each bind substrate; that span reads TEYE.

Belongs to the class I-like SAM-binding methyltransferase superfamily. TrmB family.

It carries out the reaction guanosine(46) in tRNA + S-adenosyl-L-methionine = N(7)-methylguanosine(46) in tRNA + S-adenosyl-L-homocysteine. The protein operates within tRNA modification; N(7)-methylguanine-tRNA biosynthesis. Functionally, catalyzes the formation of N(7)-methylguanine at position 46 (m7G46) in tRNA. This is tRNA (guanine-N(7)-)-methyltransferase from Bacillus cytotoxicus (strain DSM 22905 / CIP 110041 / 391-98 / NVH 391-98).